Consider the following 227-residue polypeptide: Thymidylate kinase (227 aa).

16-23 serves as a coordination point for ATP; the sequence is GIDGAGKT.

This sequence belongs to the thymidylate kinase family.

The catalysed reaction is dTMP + ATP = dTDP + ADP. Its function is as follows. Phosphorylation of dTMP to form dTDP in both de novo and salvage pathways of dTTP synthesis. The sequence is that of Thymidylate kinase from Xanthomonas campestris pv. campestris (strain 8004).